The sequence spans 131 residues: ER membrane protein complex subunit 5 (131 aa).

Residues 1–3 (MAP) lie on the Cytoplasmic side of the membrane. The helical transmembrane segment at 4-22 (SLWKGLVGIGLFALAHAAF) threads the bilayer. At 23–43 (SAAQHRSYMRLTEKEDESLPI) the chain is on the lumenal side. A helical membrane pass occupies residues 44–63 (DIVLQTLLAFAVTCYGIVHI). Over 64–131 (AGEFKDMDAT…KLRKLESLRR (68 aa)) the chain is Cytoplasmic. A Phosphoserine modification is found at Ser-120.

It belongs to the membrane magnesium transporter (TC 1.A.67) family. Component of the ER membrane protein complex (EMC).

The protein localises to the endoplasmic reticulum membrane. It is found in the golgi apparatus membrane. The protein resides in the early endosome membrane. Part of the endoplasmic reticulum membrane protein complex (EMC) that enables the energy-independent insertion into endoplasmic reticulum membranes of newly synthesized membrane proteins. Preferentially accommodates proteins with transmembrane domains that are weakly hydrophobic or contain destabilizing features such as charged and aromatic residues. Involved in the cotranslational insertion of multi-pass membrane proteins in which stop-transfer membrane-anchor sequences become ER membrane spanning helices. It is also required for the post-translational insertion of tail-anchored/TA proteins in endoplasmic reticulum membranes. By mediating the proper cotranslational insertion of N-terminal transmembrane domains in an N-exo topology, with translocated N-terminus in the lumen of the ER, controls the topology of multi-pass membrane proteins like the G protein-coupled receptors. By regulating the insertion of various proteins in membranes, it is indirectly involved in many cellular processes. May be involved in Mg(2+) transport. The sequence is that of ER membrane protein complex subunit 5 from Homo sapiens (Human).